The chain runs to 220 residues: Flagellin A2 (220 aa).

The propeptide occupies 1-11; it reads MFNNITDDDRG. Asparagine 78, asparagine 95, asparagine 112, and asparagine 124 each carry an N-linked (GlcNAc...) asparagine glycan.

This sequence belongs to the archaeal flagellin family. Post-translationally, glycosylated by a pentasaccharide similar to the S-layer glycoprotein, probably comprising a hexose, 2 hexuronic acids, a methyl ester of a hexuronic acid and mannose.

It is found in the archaeal flagellum. In terms of biological role, flagellin that plays both structural and regulatory roles in flagella biosynthesis. Does not constitute a major flagellin in terms of abundance contrary to FlgA1: may regulate the flagella-dependent swimming motility depending on the relative abundance of FlgA1. Not involved in PibD-dependent surface adhesion. The chain is Flagellin A2 (flgA2) from Haloferax volcanii (strain ATCC 29605 / DSM 3757 / JCM 8879 / NBRC 14742 / NCIMB 2012 / VKM B-1768 / DS2) (Halobacterium volcanii).